The primary structure comprises 189 residues: Thermostable direct hemolysin-related (189 aa).

The signal sequence occupies residues 1–24 (MKYRYFAKKSFLFISMLAAFKTFA). Cys-175 and Cys-185 are joined by a disulfide.

The protein belongs to the TDH hemolysin family. In terms of assembly, homodimer.

In terms of biological role, bacterial hemolysins are exotoxins that attack blood cell membranes and cause cell rupture by mechanisms not clearly defined. The sequence is that of Thermostable direct hemolysin-related (tdh3) from Vibrio parahaemolyticus.